The following is a 405-amino-acid chain: Tyrosine--tRNA ligase (405 aa).

The 'HIGH' region motif lies at 41 to 50 (PTAPDLHLGH). Positions 225–229 (KMSKS) match the 'KMSKS' region motif. K228 provides a ligand contact to ATP. In terms of domain architecture, S4 RNA-binding spans 342 to 404 (EPLLVWVLSK…GKKGKFLKII (63 aa)).

It belongs to the class-I aminoacyl-tRNA synthetase family. TyrS type 2 subfamily. As to quaternary structure, homodimer.

It is found in the cytoplasm. The catalysed reaction is tRNA(Tyr) + L-tyrosine + ATP = L-tyrosyl-tRNA(Tyr) + AMP + diphosphate + H(+). Catalyzes the attachment of tyrosine to tRNA(Tyr) in a two-step reaction: tyrosine is first activated by ATP to form Tyr-AMP and then transferred to the acceptor end of tRNA(Tyr). This chain is Tyrosine--tRNA ligase, found in Leptospira interrogans serogroup Icterohaemorrhagiae serovar Lai (strain 56601).